The chain runs to 309 residues: Aspartate carbamoyltransferase catalytic subunit (309 aa).

Carbamoyl phosphate contacts are provided by R57 and T58. Residue K86 coordinates L-aspartate. Carbamoyl phosphate contacts are provided by R107, H135, and Q138. Positions 168 and 229 each coordinate L-aspartate. Residues L269 and P270 each contribute to the carbamoyl phosphate site.

Belongs to the aspartate/ornithine carbamoyltransferase superfamily. ATCase family. Heterooligomer of catalytic and regulatory chains.

The enzyme catalyses carbamoyl phosphate + L-aspartate = N-carbamoyl-L-aspartate + phosphate + H(+). It functions in the pathway pyrimidine metabolism; UMP biosynthesis via de novo pathway; (S)-dihydroorotate from bicarbonate: step 2/3. Its function is as follows. Catalyzes the condensation of carbamoyl phosphate and aspartate to form carbamoyl aspartate and inorganic phosphate, the committed step in the de novo pyrimidine nucleotide biosynthesis pathway. The chain is Aspartate carbamoyltransferase catalytic subunit from Methanopyrus kandleri (strain AV19 / DSM 6324 / JCM 9639 / NBRC 100938).